The sequence spans 322 residues: Cytochrome f (322 aa).

A signal peptide spans 1-36; sequence MQKNRNTFSWVKEQMTRCISVSMMIYVITRASISNA. The heme site is built by Tyr-37, Cys-57, Cys-60, and His-61. A helical transmembrane segment spans residues 288 to 308; it reads IQGLLFFLASVILAQIFLVLK.

This sequence belongs to the cytochrome f family. In terms of assembly, the 4 large subunits of the cytochrome b6-f complex are cytochrome b6, subunit IV (17 kDa polypeptide, petD), cytochrome f and the Rieske protein, while the 4 small subunits are PetG, PetL, PetM and PetN. The complex functions as a dimer. The cofactor is heme.

It is found in the plastid. Its subcellular location is the chloroplast thylakoid membrane. Its function is as follows. Component of the cytochrome b6-f complex, which mediates electron transfer between photosystem II (PSII) and photosystem I (PSI), cyclic electron flow around PSI, and state transitions. The protein is Cytochrome f of Nymphaea alba (White water-lily).